A 432-amino-acid polypeptide reads, in one-letter code: Trigger factor (432 aa).

The PPIase FKBP-type domain occupies 161-246; the sequence is GSRATIDFVG…LNKVEARELP (86 aa).

It belongs to the FKBP-type PPIase family. Tig subfamily.

The protein resides in the cytoplasm. It carries out the reaction [protein]-peptidylproline (omega=180) = [protein]-peptidylproline (omega=0). Functionally, involved in protein export. Acts as a chaperone by maintaining the newly synthesized protein in an open conformation. Functions as a peptidyl-prolyl cis-trans isomerase. This chain is Trigger factor, found in Vibrio atlanticus (strain LGP32) (Vibrio splendidus (strain Mel32)).